A 488-amino-acid polypeptide reads, in one-letter code: Monothiol glutaredoxin-S17 (488 aa).

The Thioredoxin domain occupies 2–107 (SGTVKDIVSK…LANKVGKVAG (106 aa)). Glutaredoxin domains lie at 154–256 (KSRL…GITT), 284–386 (RARL…GITG), and 391–488 (EDRL…TLSE). Residue K408 participates in glutathione binding. C416 is a binding site for [2Fe-2S] cluster. Residues R445, F457, and 470 to 471 (CD) each bind glutathione.

The protein belongs to the glutaredoxin family. CGFS subfamily. In terms of assembly, [2Fe-2S]-bridged holo-homodimer. Interacts in vitro with SUFE1, BOLA1, BOLA2 and BOLA4. Interacts in vivo only with BOLA2. Interacts with RGLG3 and RGLG4. Post-translationally, ubiquitinated at Lys-154. Polyubiquitinated by RGLG3 and RGLG4. Polyubiquitination of GRXS17 leads to its degradation by the proteasome.

It localises to the cytoplasm. May only reduce GSH-thiol disulfides, but not protein disulfides. Participates probably to the maturation of iron-sulfur proteins and to the regulation of the redox state of the BOLA proteins. The GRXS17-BOLA2 heterodimer binds a labile, oxygen sensitive iron-sulfur cluster. The protein is Monothiol glutaredoxin-S17 of Arabidopsis thaliana (Mouse-ear cress).